The primary structure comprises 346 residues: Inositol 2-dehydrogenase/D-chiro-inositol 3-dehydrogenase (346 aa).

Basic and acidic residues predominate over residues 322 to 331 (GREESIELPK). Positions 322-346 (GREESIELPKKPAFYQHSAATPEQV) are disordered.

The protein belongs to the Gfo/Idh/MocA family. Homotetramer.

It carries out the reaction myo-inositol + NAD(+) = scyllo-inosose + NADH + H(+). It catalyses the reaction 1D-chiro-inositol + NAD(+) = scyllo-inosine + NADH + H(+). The protein operates within polyol metabolism; myo-inositol degradation into acetyl-CoA; acetyl-CoA from myo-inositol: step 1/7. Its function is as follows. Involved in the oxidation of myo-inositol (MI) and D-chiro-inositol (DCI) to 2-keto-myo-inositol (2KMI or 2-inosose) and 1-keto-D-chiro-inositol (1KDCI), respectively. The protein is Inositol 2-dehydrogenase/D-chiro-inositol 3-dehydrogenase of Shouchella clausii (strain KSM-K16) (Alkalihalobacillus clausii).